The chain runs to 232 residues: Ion-translocating oxidoreductase complex subunit E (232 aa).

Transmembrane regions (helical) follow at residues 12–31 (LWRN…LLAV), 39–59 (LGLG…VSAL), 69–89 (IPIY…LINA), 92–112 (FGLY…CIVI), 125–145 (ALAA…LLLL), and 182–202 (PFLL…MLVG).

This sequence belongs to the NqrDE/RnfAE family. The complex is composed of six subunits: RnfA, RnfB, RnfC, RnfD, RnfE and RnfG.

Its subcellular location is the cell inner membrane. Functionally, part of a membrane-bound complex that couples electron transfer with translocation of ions across the membrane. This chain is Ion-translocating oxidoreductase complex subunit E, found in Sodalis glossinidius (strain morsitans).